The sequence spans 109 residues: Phosphoribosyl-ATP pyrophosphatase (109 aa).

Belongs to the PRA-PH family.

It localises to the cytoplasm. The catalysed reaction is 1-(5-phospho-beta-D-ribosyl)-ATP + H2O = 1-(5-phospho-beta-D-ribosyl)-5'-AMP + diphosphate + H(+). It participates in amino-acid biosynthesis; L-histidine biosynthesis; L-histidine from 5-phospho-alpha-D-ribose 1-diphosphate: step 2/9. The polypeptide is Phosphoribosyl-ATP pyrophosphatase (Geobacter metallireducens (strain ATCC 53774 / DSM 7210 / GS-15)).